A 463-amino-acid chain; its full sequence is POU domain, class 2, transcription factor 2 (463 aa).

Disordered stretches follow at residues 1-87 (MVHS…QPHL), 159-182 (QPRA…EEPS), 259-282 (SSLP…GRRR), 341-376 (PCSA…LSQA), and 393-463 (TLHP…PYQP). Over residues 12–37 (RMSKPLEAEKQSLDSPSEHTDTERNG) the composition is skewed to basic and acidic residues. Polar residues predominate over residues 41-60 (NHQNPQNKASPFSVSPTGPS). The span at 75-85 (AAPPPPQPAQP) shows a compositional bias: pro residues. The POU-specific domain occupies 179–253 (EEPSDLEELE…LLEKWLNDAE (75 aa)). A compositionally biased stretch (low complexity) spans 259-272 (SSLPSPNQLSSPSL). The homeobox DNA-binding region spans 281–340 (RRKKRTSIETNVRFALEKSFLANQKPTSEEILLIAEQLHMEKEVIRVWFCNRRQKEKRIN). Residues 373-394 (LSQASSSLSTTVTTLSSAVGTL) are leucine-zipper. A compositionally biased stretch (gly residues) spans 400–409 (AGGGGGGGGA).

This sequence belongs to the POU transcription factor family. Class-2 subfamily. Interacts with NR3C1, AR and PGR. Interacts with POU2AF1; the interaction increases POU2F2 transactivation activity. As to expression, highest in B cells, but also present in brain (neuronal and glial cells), intestine, kidney, and testes. Expressed at higher levels in B-cells than in neuronal cells. In terms of tissue distribution, expressed in neuronal cell lines and brain, but not dorsal root ganglia. As to expression, expressed at lower levels in neuronal cells than in B cells. Expressed in neuronal cell lines, and at lower levels in neuroblastoma and dorsal root ganglia. In terms of tissue distribution, widely expressed in the developing nervous system but expression is confined to very specific regions in the adult brain, it is expressed at a lower level in B cells. As to expression, either absent in, or expressed at very low levels in neuronal cells and brain. Expressed in all tissues tested: mammary gland, liver, spleen, lung, kidney intestine, uterus and ovary of a virgin mouse. Levels of isoform OCT2.7 are highest in spleen and lung. In mammary gland, expression is localized to the alveolus epithelial cells.

The protein resides in the cytoplasm. It localises to the nucleus. Transactivation activity is enhanced by transcriptional coactivator POU2AF1. In terms of biological role, transcription factor that specifically binds to the octamer motif (5'-ATTTGCAT-3'). Regulates IL6 expression in B cells with POU2AF1. Regulates transcription in a number of tissues in addition to activating immunoglobulin gene expression. Modulates transcription transactivation by NR3C1, AR and PGR. Its function is as follows. Activates octamer-containing promoters. Represses some promoters and activate others. Functionally, represses some promoters and activate others. Activates the U2 small nuclear RNA (snRNA) promoter. In terms of biological role, unable to bind to the octamer motif, but can still activate the beta-casein gene promoter at low levels. The protein is POU domain, class 2, transcription factor 2 of Mus musculus (Mouse).